The sequence spans 360 residues: Alkanal monooxygenase alpha chain (360 aa).

This sequence belongs to the bacterial luciferase oxidoreductase family. In terms of assembly, heterodimer of an alpha and a beta chain.

It catalyses the reaction a long-chain fatty aldehyde + FMNH2 + O2 = a long-chain fatty acid + hnu + FMN + H2O + 2 H(+). Its function is as follows. Light-emitting reaction in luminous bacteria. The polypeptide is Alkanal monooxygenase alpha chain (luxA) (Photorhabdus luminescens (Xenorhabdus luminescens)).